The sequence spans 1206 residues: Translocase of chloroplast 132, chloroplastic (1206 aa).

An N-acetylglycine modification is found at G2. Residues 13–33 (REDKKLAEDRISDEQVVKNEL) are a coiled coil. Disordered regions lie at residues 33 to 75 (LVRS…SDDL) and 97 to 119 (VGDLDETSSNEGGVKDFTAVGES). The span at 39-49 (VRDDNEDEVFE) shows a compositional bias: acidic residues. S195 bears the Phosphoserine mark. Positions 233 to 499 (QTEQEVEEGE…TTTEADEHDE (267 aa)) are disordered. Polar residues predominate over residues 309-324 (AYTSNIVTNASGDNEV). Over residues 325–336 (SSAVTSSPLEES) the composition is skewed to low complexity. Phosphoserine occurs at positions 337, 363, and 398. A compositionally biased stretch (polar residues) spans 357–379 (LASSPHSYPESTEVHSNSGSPGV). The segment covering 403-427 (KELEKQQSSRVHVDPEITENSHVET) has biased composition (basic and acidic residues). Positions 430–440 (EVVSSVSPTES) are enriched in low complexity. The segment covering 468 to 492 (APQQSRVNGNGSHNQFQQAEDSTTT) has biased composition (polar residues). The region spanning 572-801 (DFSCTIMVLG…KLQDNIPGRP (230 aa)) is the AIG1-type G domain. The segment at 581–588 (GKSGVGKS) is G1. GTP contacts are provided by residues 584-589 (GVGKSA) and 603-608 (DAFQMG). S588 lines the Mg(2+) pocket. A homodimerization region spans residues 603–606 (DAFQ). Residues 607-611 (MGTKR) form a G2 region. Residues 628–631 (DTPG) are G3. A homodimerization region spans residues 666-671 (RLDMQS). The G4 stretch occupies residues 700–703 (THAA). Residues H701 and 749 to 750 (EN) contribute to the GTP site. The tract at residues 749-751 (ENH) is G5. A disordered region spans residues 824 to 862 (QPKLPEQQYGDEEDEDDLEESSDSDEESEYDQLPPFKSL). Acidic residues predominate over residues 832-853 (YGDEEDEDDLEESSDSDEESEY). Residues 1182–1199 (LAMVAIVPLFKKLLSYYY) form a helical membrane-spanning segment.

The protein belongs to the TRAFAC class TrmE-Era-EngA-EngB-Septin-like GTPase superfamily. AIG1/Toc34/Toc159-like paraseptin GTPase family. TOC159 subfamily. In terms of assembly, homodimer. Part of the TOC core complex that includes 1 protein for the specific recognition of transit peptides surrounded by a ring composed of four proteins forming translocation channels, and four to five GTP-binding proteins providing energy. This core complex can interact with components of the TIC complex to form a larger import complex. Chloroplastic protein precursor such as prSS (precursor of the RuBisCO small subunit) interacts with these complexes. The TOC complex contains a specific subset of polar lipids such as digalactosyldiacylglyceride (DGDG), phosphatidylcholine (PC) and phosphatidylglycerol (PG). Requires Mg(2+) as cofactor. Phosphorylated by KOC1. In terms of tissue distribution, expressed in seedlings, leaves, flowers, and roots.

The protein resides in the plastid. It localises to the chloroplast outer membrane. The protein localises to the cytoplasm. Functionally, GTPase involved in protein precursor import into chloroplasts. Seems to recognize chloroplast-destined precursor proteins and regulate their presentation to the translocation channel through GTP hydrolysis. Probably specialized in the import of nuclear encoded non-photosynthetic preproteins from the cytoplasm to the chloroplast. The polypeptide is Translocase of chloroplast 132, chloroplastic (Arabidopsis thaliana (Mouse-ear cress)).